The chain runs to 439 residues: MHSWSAPRVPQFPSSIPAVADSPAAEVAALPELRLYDTADDRVKAVALPDDGAPVGIYVCGITPYDSTHLGHAATYNTFDLVNRYLRAAGHGVTYVQNVTDVDDPLFERADRDGVDWRELGKEQTDLFRSDMTQLRILPPEFFVGAMETIDEVVEMVSTLLDKGAAYVVDGEYPDIYADHTYTEQFGYESRYDEATMRELFAERGGDPEREGKRHPLDALLWRAHRTGEPEWDAPFGSGRPGWHVECAAIATNRLGEQFAIQGGGVDLRYPHHEYSAAHAEAACGNQRMAGHYVHTGMIGLEGTKMSKSLGNLEFVSALTAQGFDPAAIRVGLYAGHYREDRDWSAEVLNEAEDRLAKWRAAAAEENNPQRVAEVLATVTGHLANDLDTPSVLRTLDEWAAAVNESIGASGYQVTPAADRTAASQALTAGLDALLGVSV.

Cys60 lines the Zn(2+) pocket. L-cysteinyl-5'-AMP contacts are provided by residues 60–63 (CGIT), Thr75, and 98–100 (NVT). The 'HIGH' region signature appears at 62-72 (ITPYDSTHLGH). A 'ERGGDP' region motif is present at residues 203 to 208 (ERGGDP). Trp243 contributes to the L-cysteinyl-5'-AMP binding site. Cys247 contacts Zn(2+). 265–267 (GVD) lines the L-cysteinyl-5'-AMP pocket. Residue His272 coordinates Zn(2+). L-cysteinyl-5'-AMP is bound at residue Ile299. A 'KMSKS' region motif is present at residues 305–309 (KMSKS).

Belongs to the class-I aminoacyl-tRNA synthetase family. MshC subfamily. In terms of assembly, monomer. The cofactor is Zn(2+).

It catalyses the reaction 1D-myo-inositol 2-amino-2-deoxy-alpha-D-glucopyranoside + L-cysteine + ATP = 1D-myo-inositol 2-(L-cysteinylamino)-2-deoxy-alpha-D-glucopyranoside + AMP + diphosphate + H(+). Functionally, catalyzes the ATP-dependent condensation of GlcN-Ins and L-cysteine to form L-Cys-GlcN-Ins. In Corynebacterium urealyticum (strain ATCC 43042 / DSM 7109), this protein is L-cysteine:1D-myo-inositol 2-amino-2-deoxy-alpha-D-glucopyranoside ligase 2.